Here is a 255-residue protein sequence, read N- to C-terminus: Ribosomal RNA small subunit methyltransferase A (255 aa).

Residues N12, L14, G39, E60, D84, and N106 each contribute to the S-adenosyl-L-methionine site.

The protein belongs to the class I-like SAM-binding methyltransferase superfamily. rRNA adenine N(6)-methyltransferase family. RsmA subfamily.

It localises to the cytoplasm. It carries out the reaction adenosine(1518)/adenosine(1519) in 16S rRNA + 4 S-adenosyl-L-methionine = N(6)-dimethyladenosine(1518)/N(6)-dimethyladenosine(1519) in 16S rRNA + 4 S-adenosyl-L-homocysteine + 4 H(+). Functionally, specifically dimethylates two adjacent adenosines (A1518 and A1519) in the loop of a conserved hairpin near the 3'-end of 16S rRNA in the 30S particle. May play a critical role in biogenesis of 30S subunits. The protein is Ribosomal RNA small subunit methyltransferase A of Janthinobacterium sp. (strain Marseille) (Minibacterium massiliensis).